Reading from the N-terminus, the 368-residue chain is Probable deoxyhypusine synthase (368 aa).

NAD(+) is bound by residues 100 to 104 (SNLVS), 126 to 128 (TAG), Glu-132, and Asp-233. 131–132 (EE) serves as a coordination point for spermidine. Asp-238 lines the spermidine pocket. Gly-278 is a binding site for NAD(+). Spermidine is bound at residue His-283. 303–304 (TA) is an NAD(+) binding site. Spermidine-binding positions include 309–311 (GSD) and 318–324 (EAISWGK). Lys-324 serves as the catalytic Nucleophile. 337-338 (EA) contributes to the NAD(+) binding site.

This sequence belongs to the deoxyhypusine synthase family. NAD(+) serves as cofactor.

The catalysed reaction is [eIF5A protein]-L-lysine + spermidine = [eIF5A protein]-deoxyhypusine + propane-1,3-diamine. It participates in protein modification; eIF5A hypusination. In terms of biological role, catalyzes the NAD-dependent oxidative cleavage of spermidine and the subsequent transfer of the butylamine moiety of spermidine to the epsilon-amino group of a specific lysine residue of the eIF-5A precursor protein to form the intermediate deoxyhypusine residue. The chain is Probable deoxyhypusine synthase from Drosophila melanogaster (Fruit fly).